We begin with the raw amino-acid sequence, 239 residues long: 3-dehydroquinate dehydratase (239 aa).

3-dehydroquinate-binding positions include 35 to 37 (ELR) and Arg70. His133 acts as the Proton donor/acceptor in catalysis. Lys160 (schiff-base intermediate with substrate) is an active-site residue. Residues Arg202 and Gln225 each coordinate 3-dehydroquinate.

Belongs to the type-I 3-dehydroquinase family. Homodimer.

It carries out the reaction 3-dehydroquinate = 3-dehydroshikimate + H2O. Its pathway is metabolic intermediate biosynthesis; chorismate biosynthesis; chorismate from D-erythrose 4-phosphate and phosphoenolpyruvate: step 3/7. Functionally, involved in the third step of the chorismate pathway, which leads to the biosynthesis of aromatic amino acids. Catalyzes the cis-dehydration of 3-dehydroquinate (DHQ) and introduces the first double bond of the aromatic ring to yield 3-dehydroshikimate. This is 3-dehydroquinate dehydratase from Staphylococcus saprophyticus subsp. saprophyticus (strain ATCC 15305 / DSM 20229 / NCIMB 8711 / NCTC 7292 / S-41).